The chain runs to 807 residues: 1-phosphatidylinositol 4,5-bisphosphate phosphodiesterase delta-4 (807 aa).

Residues 16-124 (LLMQEGTMMR…WMRGLQLLVD (109 aa)) enclose the PH domain. The tract at residues 26-53 (KVRTKSWKKLRYFRLQNDGMTVWHGSQP) is substrate binding. EF-hand domains follow at residues 134–169 (QMDQ…MNVE), 170–205 (MDEE…LTKR), and 203–237 (TKRT…EQKE). Ca(2+) is bound by residues Asp-147, Asn-149, Asp-151, Arg-153, Glu-158, Asp-183, Ser-187, Asp-189, and Glu-194. Positions 213–243 (EDFSSDKQKLTLLEFVDFLRKEQKEKDHAPD) match the GBA motif. One can recognise a PI-PLC X-box domain in the interval 290–435 (QDMTQPLSHY…LRGKILVKGK (146 aa)). The active site involves His-305. Ca(2+) contacts are provided by Asn-306, Glu-335, and Asp-337. His-350 is an active-site residue. Residue Glu-384 coordinates Ca(2+). Positions 433 and 435 each coordinate substrate. The interval 442–490 (VDKEEEEEEEEEELEKDEGPDLDPASPELDTQPQPETQGQAAGNKKERK) is disordered. Residues 443 to 462 (DKEEEEEEEEEELEKDEGPD) show a composition bias toward acidic residues. Polar residues predominate over residues 470–482 (LDTQPQPETQGQA). Residues 538 to 654 (LSALVVYLRT…GYVLKPEFLR (117 aa)) form the PI-PLC Y-box domain. Ser-567 and Arg-594 together coordinate substrate. Positions 654 to 781 (RDTQSSFNPE…QGYRHVSLLS (128 aa)) constitute a C2 domain. Ca(2+) contacts are provided by Asp-697, Asn-721, Asp-750, and Tyr-751. Positions 776–779 (HVSL) match the PDZ-binding motif.

As to quaternary structure, interacts with GRIP1. Interacts (via GBA motif) with guanine nucleotide-binding protein G(i) alpha subunit GNAI3 (inactive GDP-bound form)l low-affinity interaction. It depends on Ca(2+) as a cofactor.

Its subcellular location is the membrane. It is found in the nucleus. It localises to the cytoplasm. The protein localises to the endoplasmic reticulum. The enzyme catalyses a 1,2-diacyl-sn-glycero-3-phospho-(1D-myo-inositol-4,5-bisphosphate) + H2O = 1D-myo-inositol 1,4,5-trisphosphate + a 1,2-diacyl-sn-glycerol + H(+). It catalyses the reaction a 1,2-diacyl-sn-glycero-3-phospho-(1D-myo-inositol) + H2O = 1D-myo-inositol 1-phosphate + a 1,2-diacyl-sn-glycerol + H(+). In terms of biological role, hydrolyzes the phosphatidylinositol 4,5-bisphosphate (PIP2) to generate 2 second messenger molecules diacylglycerol (DAG) and inositol 1,4,5-trisphosphate (IP3). DAG mediates the activation of protein kinase C (PKC), while IP3 releases Ca(2+) from intracellular stores. Required for acrosome reaction in sperm during fertilization, probably by acting as an important enzyme for intracellular Ca(2+) mobilization in the zona pellucida-induced acrosome reaction. May play a role in cell growth. Modulates the liver regeneration in cooperation with nuclear PKC. Overexpression up-regulates the Erk signaling pathway and proliferation. The polypeptide is 1-phosphatidylinositol 4,5-bisphosphate phosphodiesterase delta-4 (Mus musculus (Mouse)).